Consider the following 212-residue polypeptide: Pyridoxine/pyridoxamine 5'-phosphate oxidase (212 aa).

The segment at 1–20 is disordered; that stretch reads MSDSAMEPQNPLTSGDFTAA. Residues 59-64, 74-75, lysine 81, and glutamine 103 contribute to the FMN site; these read RMVLLK and YT. Position 64 (lysine 64) interacts with substrate. Residues tyrosine 121, arginine 125, and serine 129 each contribute to the substrate site. Residues 138 to 139 and tryptophan 183 contribute to the FMN site; that span reads QS. Position 189-191 (189-191) interacts with substrate; it reads RLH. Residue arginine 193 participates in FMN binding.

The protein belongs to the pyridoxamine 5'-phosphate oxidase family. Homodimer. Requires FMN as cofactor.

The catalysed reaction is pyridoxamine 5'-phosphate + O2 + H2O = pyridoxal 5'-phosphate + H2O2 + NH4(+). It catalyses the reaction pyridoxine 5'-phosphate + O2 = pyridoxal 5'-phosphate + H2O2. It participates in cofactor metabolism; pyridoxal 5'-phosphate salvage; pyridoxal 5'-phosphate from pyridoxamine 5'-phosphate: step 1/1. The protein operates within cofactor metabolism; pyridoxal 5'-phosphate salvage; pyridoxal 5'-phosphate from pyridoxine 5'-phosphate: step 1/1. Its function is as follows. Catalyzes the oxidation of either pyridoxine 5'-phosphate (PNP) or pyridoxamine 5'-phosphate (PMP) into pyridoxal 5'-phosphate (PLP). This is Pyridoxine/pyridoxamine 5'-phosphate oxidase from Azorhizobium caulinodans (strain ATCC 43989 / DSM 5975 / JCM 20966 / LMG 6465 / NBRC 14845 / NCIMB 13405 / ORS 571).